A 450-amino-acid chain; its full sequence is Phosphoglucosamine mutase (450 aa).

Serine 103 acts as the Phosphoserine intermediate in catalysis. Positions 103, 243, 245, and 247 each coordinate Mg(2+). Serine 103 carries the phosphoserine modification.

The protein belongs to the phosphohexose mutase family. Requires Mg(2+) as cofactor. In terms of processing, activated by phosphorylation.

The enzyme catalyses alpha-D-glucosamine 1-phosphate = D-glucosamine 6-phosphate. Functionally, catalyzes the conversion of glucosamine-6-phosphate to glucosamine-1-phosphate. This Lactobacillus delbrueckii subsp. bulgaricus (strain ATCC BAA-365 / Lb-18) protein is Phosphoglucosamine mutase.